We begin with the raw amino-acid sequence, 611 residues long: UvrABC system protein C (611 aa).

A GIY-YIG domain is found at 14-91 (TSPGCYIHKD…IKENQPKYNI (78 aa)). In terms of domain architecture, UVR spans 196–231 (DQIIEDLRGKMAGAAQAMEFEKAAEYRDLIQSIGTL). A disordered region spans residues 587-611 (KLNPKTQEQEQAQLREVAEPQIGLE).

The protein belongs to the UvrC family. In terms of assembly, interacts with UvrB in an incision complex.

It is found in the cytoplasm. In terms of biological role, the UvrABC repair system catalyzes the recognition and processing of DNA lesions. UvrC both incises the 5' and 3' sides of the lesion. The N-terminal half is responsible for the 3' incision and the C-terminal half is responsible for the 5' incision. The chain is UvrABC system protein C from Streptococcus sanguinis (strain SK36).